The following is a 438-amino-acid chain: Adenylyltransferase and sulfurtransferase MOCS3 (438 aa).

ATP-binding positions include G80, D101, 108-112 (TNLHR), K125, and 169-170 (DN). Zn(2+) is bound by residues C210 and C213. C227 functions as the Glycyl thioester intermediate; for adenylyltransferase activity in the catalytic mechanism. Residues C285 and C288 each contribute to the Zn(2+) site. One can recognise a Rhodanese domain in the interval 335-436 (SKQRHVLVDV…WTRNVDKEFP (102 aa)). C392 (cysteine persulfide intermediate; for sulfurtransferase activity) is an active-site residue.

This sequence in the N-terminal section; belongs to the HesA/MoeB/ThiF family. UBA4 subfamily. Requires Zn(2+) as cofactor.

The protein localises to the cytoplasm. It is found in the cytosol. The catalysed reaction is [molybdopterin-synthase sulfur-carrier protein]-C-terminal Gly-Gly + ATP + H(+) = [molybdopterin-synthase sulfur-carrier protein]-C-terminal Gly-Gly-AMP + diphosphate. The enzyme catalyses [molybdopterin-synthase sulfur-carrier protein]-C-terminal Gly-Gly-AMP + S-sulfanyl-L-cysteinyl-[cysteine desulfurase] + AH2 = [molybdopterin-synthase sulfur-carrier protein]-C-terminal-Gly-aminoethanethioate + L-cysteinyl-[cysteine desulfurase] + A + AMP + 2 H(+). It functions in the pathway tRNA modification; 5-methoxycarbonylmethyl-2-thiouridine-tRNA biosynthesis. Its pathway is cofactor biosynthesis; molybdopterin biosynthesis. Plays a central role in 2-thiolation of mcm(5)S(2)U at tRNA wobble positions of cytosolic tRNA(Lys), tRNA(Glu) and tRNA(Gln). Also essential during biosynthesis of the molybdenum cofactor. Acts by mediating the C-terminal thiocarboxylation of sulfur carriers URM1 and MOCS2A. Its N-terminus first activates URM1 and MOCS2A as acyl-adenylates (-COAMP), then the persulfide sulfur on the catalytic cysteine is transferred to URM1 and MOCS2A to form thiocarboxylation (-COSH) of their C-terminus. The reaction probably involves hydrogen sulfide that is generated from the persulfide intermediate and that acts as a nucleophile towards URM1 and MOCS2A. Subsequently, a transient disulfide bond is formed. Does not use thiosulfate as sulfur donor; NFS1 probably acting as a sulfur donor for thiocarboxylation reactions. The protein is Adenylyltransferase and sulfurtransferase MOCS3 of Culex quinquefasciatus (Southern house mosquito).